The primary structure comprises 225 residues: 3-dehydroquinate dehydratase (225 aa).

3-dehydroquinate is bound by residues Ser-6, 30-32 (EWR), and Arg-62. His-118 serves as the catalytic Proton donor/acceptor. Catalysis depends on Lys-143, which acts as the Schiff-base intermediate with substrate. 3-dehydroquinate-binding residues include Arg-186, Ser-205, and Gln-209.

This sequence belongs to the type-I 3-dehydroquinase family. Homodimer.

The catalysed reaction is 3-dehydroquinate = 3-dehydroshikimate + H2O. It functions in the pathway metabolic intermediate biosynthesis; chorismate biosynthesis; chorismate from D-erythrose 4-phosphate and phosphoenolpyruvate: step 3/7. Its function is as follows. Involved in the third step of the chorismate pathway, which leads to the biosynthesis of aromatic amino acids. Catalyzes the cis-dehydration of 3-dehydroquinate (DHQ) and introduces the first double bond of the aromatic ring to yield 3-dehydroshikimate. The chain is 3-dehydroquinate dehydratase from Streptococcus sanguinis (strain SK36).